The chain runs to 579 residues: Putative adenine deaminase OB0751 (579 aa).

Belongs to the metallo-dependent hydrolases superfamily. Adenine deaminase family.

The catalysed reaction is adenine + H2O + H(+) = hypoxanthine + NH4(+). This Oceanobacillus iheyensis (strain DSM 14371 / CIP 107618 / JCM 11309 / KCTC 3954 / HTE831) protein is Putative adenine deaminase OB0751.